We begin with the raw amino-acid sequence, 247 residues long: Exosome complex component Rrp4 (247 aa).

Residues 75–148 enclose the S1 motif domain; it reads DDLVIGIVEN…RDPVITVKGK (74 aa). Positions 154–220 constitute a KH domain; it reads TEGVVVDVKP…QAIKLIELKA (67 aa).

The protein belongs to the RRP4 family. As to quaternary structure, component of the archaeal exosome complex. Forms a trimer of Rrp4 and/or Csl4 subunits. The trimer associates with a hexameric ring-like arrangement composed of 3 Rrp41-Rrp42 heterodimers.

It localises to the cytoplasm. In terms of biological role, non-catalytic component of the exosome, which is a complex involved in RNA degradation. Increases the RNA binding and the efficiency of RNA degradation. Confers strong poly(A) specificity to the exosome. The chain is Exosome complex component Rrp4 from Thermosphaera aggregans (strain DSM 11486 / M11TL).